A 145-amino-acid chain; its full sequence is 3-hydroxyacyl-[acyl-carrier-protein] dehydratase FabZ (145 aa).

His-49 is an active-site residue.

This sequence belongs to the thioester dehydratase family. FabZ subfamily.

Its subcellular location is the cytoplasm. It catalyses the reaction a (3R)-hydroxyacyl-[ACP] = a (2E)-enoyl-[ACP] + H2O. Involved in unsaturated fatty acids biosynthesis. Catalyzes the dehydration of short chain beta-hydroxyacyl-ACPs and long chain saturated and unsaturated beta-hydroxyacyl-ACPs. The polypeptide is 3-hydroxyacyl-[acyl-carrier-protein] dehydratase FabZ (Rickettsia africae (strain ESF-5)).